A 528-amino-acid polypeptide reads, in one-letter code: ATP synthase subunit alpha (528 aa).

169-176 (GDRQTGKT) contributes to the ATP binding site.

Belongs to the ATPase alpha/beta chains family. In terms of assembly, F-type ATPases have 2 components, CF(1) - the catalytic core - and CF(0) - the membrane proton channel. CF(1) has five subunits: alpha(3), beta(3), gamma(1), delta(1), epsilon(1). CF(0) has three main subunits: a(1), b(2) and c(9-12). The alpha and beta chains form an alternating ring which encloses part of the gamma chain. CF(1) is attached to CF(0) by a central stalk formed by the gamma and epsilon chains, while a peripheral stalk is formed by the delta and b chains.

The protein localises to the cell membrane. The catalysed reaction is ATP + H2O + 4 H(+)(in) = ADP + phosphate + 5 H(+)(out). In terms of biological role, produces ATP from ADP in the presence of a proton gradient across the membrane. The alpha chain is a regulatory subunit. The protein is ATP synthase subunit alpha of Mycoplasmopsis agalactiae (strain NCTC 10123 / CIP 59.7 / PG2) (Mycoplasma agalactiae).